The primary structure comprises 625 residues: Arginine--tRNA ligase (625 aa).

The short motif at 117–127 (ANPIHPLHIGH) is the 'HIGH' region element.

This sequence belongs to the class-I aminoacyl-tRNA synthetase family.

Its subcellular location is the cytoplasm. The enzyme catalyses tRNA(Arg) + L-arginine + ATP = L-arginyl-tRNA(Arg) + AMP + diphosphate. The sequence is that of Arginine--tRNA ligase from Saccharolobus solfataricus (strain ATCC 35092 / DSM 1617 / JCM 11322 / P2) (Sulfolobus solfataricus).